Here is a 614-residue protein sequence, read N- to C-terminus: FAD-dependent monooxygenase terD (614 aa).

Positions 1 to 23 (MSSKFDVVICGSGTAGLAAATWL) are cleaved as a signal peptide. FAD contacts are provided by residues 6 to 35 (DVVI…ILES), Q44, V137, and 239 to 241 (RVY). A glycan (N-linked (GlcNAc...) asparagine) is linked at N260. Residues Y282 and D303 each coordinate FAD. N317 carries N-linked (GlcNAc...) asparagine glycosylation. S319 provides a ligand contact to FAD. N602 carries an N-linked (GlcNAc...) asparagine glycan.

This sequence belongs to the PheA/TfdB FAD monooxygenase family. FAD serves as cofactor.

It participates in secondary metabolite biosynthesis. FAD-dependent monooxygenase; part of the gene cluster that mediates the biosynthesis of terrein, a fungal metabolite with ecological, antimicrobial, antiproliferative, and antioxidative activities. The first step in the pathway is performed by the polyketide synthase terA that produces 4-hydroxy-6-methylpyranon (4-HMP), orsellinic acid (OA), and 2,3-dehydro-6-hydroxymellein (2,3-dehydro-6-HM) by condensing acetyl-CoA with two, three, or four malonyl-CoA units, respectively. 4-HMP and OA are not pathway intermediates, but are rather shunt or side products. 2,3-dehydro-6-HM is further converted to 6-hydroxymellein (6-HM) by the 6-hydroxymellein synthase terB. The monooxygenases terC and terD, the multicopper oxidase terE and the Kelch-like protein terF are then involved in the transformation of 6-HM to terrein. Even if they are co-regulated with the other terrein cluster genes, terH and terI seem to be dispensable for terrein production; whereas one or both of the 2 transporters terG and terJ are probably required for efficient secretion of metabolites. This is FAD-dependent monooxygenase terD from Aspergillus terreus (strain NIH 2624 / FGSC A1156).